A 290-amino-acid polypeptide reads, in one-letter code: NAD kinase (290 aa).

The Proton acceptor role is filled by D75. NAD(+) contacts are provided by residues 75 to 76, 148 to 149, D178, 189 to 194, and Q247; these read DG, NE, and TAYNIS.

The protein belongs to the NAD kinase family. It depends on a divalent metal cation as a cofactor.

It is found in the cytoplasm. It carries out the reaction NAD(+) + ATP = ADP + NADP(+) + H(+). Involved in the regulation of the intracellular balance of NAD and NADP, and is a key enzyme in the biosynthesis of NADP. Catalyzes specifically the phosphorylation on 2'-hydroxyl of the adenosine moiety of NAD to yield NADP. The protein is NAD kinase of Wolinella succinogenes (strain ATCC 29543 / DSM 1740 / CCUG 13145 / JCM 31913 / LMG 7466 / NCTC 11488 / FDC 602W) (Vibrio succinogenes).